The chain runs to 89 residues: Small ribosomal subunit protein uS15 (89 aa).

It belongs to the universal ribosomal protein uS15 family. In terms of assembly, part of the 30S ribosomal subunit. Forms a bridge to the 50S subunit in the 70S ribosome, contacting the 23S rRNA.

Its function is as follows. One of the primary rRNA binding proteins, it binds directly to 16S rRNA where it helps nucleate assembly of the platform of the 30S subunit by binding and bridging several RNA helices of the 16S rRNA. In terms of biological role, forms an intersubunit bridge (bridge B4) with the 23S rRNA of the 50S subunit in the ribosome. The protein is Small ribosomal subunit protein uS15 of Janthinobacterium sp. (strain Marseille) (Minibacterium massiliensis).